We begin with the raw amino-acid sequence, 220 residues long: Probable transcriptional regulator NRG2 (220 aa).

2 consecutive C2H2-type zinc fingers follow at residues His153 to His175 and His181 to His205.

The protein resides in the nucleus. Functionally, transcriptional repressor. This chain is Probable transcriptional regulator NRG2 (NRG2), found in Saccharomyces cerevisiae (strain ATCC 204508 / S288c) (Baker's yeast).